We begin with the raw amino-acid sequence, 129 residues long: Glycine cleavage system H protein (129 aa).

A Lipoyl-binding domain is found at 24–106 (SVVVGVTQHA…YGAGWIVEIE (83 aa)). Lys65 bears the N6-lipoyllysine mark.

Belongs to the GcvH family. As to quaternary structure, the glycine cleavage system is composed of four proteins: P, T, L and H. (R)-lipoate is required as a cofactor.

Its function is as follows. The glycine cleavage system catalyzes the degradation of glycine. The H protein shuttles the methylamine group of glycine from the P protein to the T protein. In Myxococcus xanthus (strain DK1622), this protein is Glycine cleavage system H protein.